The sequence spans 162 residues: Xanthine-guanine phosphoribosyltransferase (162 aa).

Residues 43 to 44 and 94 to 102 each bind 5-phospho-alpha-D-ribose 1-diphosphate; these read RG and DDLVDTGTT. Residue D95 participates in Mg(2+) binding. Guanine is bound by residues D98 and I141. Xanthine contacts are provided by D98 and I141. GMP is bound by residues 98–102 and 140–141; these read DTGTT and WI.

It belongs to the purine/pyrimidine phosphoribosyltransferase family. XGPT subfamily. In terms of assembly, homotetramer. It depends on Mg(2+) as a cofactor.

The protein resides in the cell inner membrane. It catalyses the reaction GMP + diphosphate = guanine + 5-phospho-alpha-D-ribose 1-diphosphate. The enzyme catalyses XMP + diphosphate = xanthine + 5-phospho-alpha-D-ribose 1-diphosphate. It carries out the reaction IMP + diphosphate = hypoxanthine + 5-phospho-alpha-D-ribose 1-diphosphate. It functions in the pathway purine metabolism; GMP biosynthesis via salvage pathway; GMP from guanine: step 1/1. It participates in purine metabolism; XMP biosynthesis via salvage pathway; XMP from xanthine: step 1/1. Purine salvage pathway enzyme that catalyzes the transfer of the ribosyl-5-phosphate group from 5-phospho-alpha-D-ribose 1-diphosphate (PRPP) to the N9 position of the 6-oxopurines guanine and xanthine to form the corresponding ribonucleotides GMP (guanosine 5'-monophosphate) and XMP (xanthosine 5'-monophosphate), with the release of PPi. To a lesser extent, also acts on hypoxanthine. The sequence is that of Xanthine-guanine phosphoribosyltransferase from Oleidesulfovibrio alaskensis (strain ATCC BAA-1058 / DSM 17464 / G20) (Desulfovibrio alaskensis).